The following is a 199-amino-acid chain: Recombination protein RecR (199 aa).

Residues 58 to 73 form a C4-type zinc finger; that stretch reads CRICYNITDTEVCNIC. The region spanning 81 to 176 is the Toprim domain; sequence SLICVVSHPM…KVTRIAHGVP (96 aa).

It belongs to the RecR family.

Functionally, may play a role in DNA repair. It seems to be involved in an RecBC-independent recombinational process of DNA repair. It may act with RecF and RecO. The polypeptide is Recombination protein RecR (Thermoanaerobacter sp. (strain X514)).